The chain runs to 319 residues: 4-hydroxy-3-methylbut-2-enyl diphosphate reductase (319 aa).

A [4Fe-4S] cluster-binding site is contributed by cysteine 12. Histidine 41 and histidine 74 together coordinate (2E)-4-hydroxy-3-methylbut-2-enyl diphosphate. Dimethylallyl diphosphate contacts are provided by histidine 41 and histidine 74. Isopentenyl diphosphate contacts are provided by histidine 41 and histidine 74. Cysteine 96 is a binding site for [4Fe-4S] cluster. Histidine 124 contributes to the (2E)-4-hydroxy-3-methylbut-2-enyl diphosphate binding site. Histidine 124 contributes to the dimethylallyl diphosphate binding site. Position 124 (histidine 124) interacts with isopentenyl diphosphate. Glutamate 126 serves as the catalytic Proton donor. A (2E)-4-hydroxy-3-methylbut-2-enyl diphosphate-binding site is contributed by threonine 167. Cysteine 197 contacts [4Fe-4S] cluster. (2E)-4-hydroxy-3-methylbut-2-enyl diphosphate-binding residues include serine 225, serine 226, asparagine 227, and serine 269. The dimethylallyl diphosphate site is built by serine 225, serine 226, asparagine 227, and serine 269. Isopentenyl diphosphate contacts are provided by serine 225, serine 226, asparagine 227, and serine 269.

The protein belongs to the IspH family. In terms of assembly, homodimer. [4Fe-4S] cluster is required as a cofactor.

The enzyme catalyses isopentenyl diphosphate + 2 oxidized [2Fe-2S]-[ferredoxin] + H2O = (2E)-4-hydroxy-3-methylbut-2-enyl diphosphate + 2 reduced [2Fe-2S]-[ferredoxin] + 2 H(+). The catalysed reaction is dimethylallyl diphosphate + 2 oxidized [2Fe-2S]-[ferredoxin] + H2O = (2E)-4-hydroxy-3-methylbut-2-enyl diphosphate + 2 reduced [2Fe-2S]-[ferredoxin] + 2 H(+). The protein operates within isoprenoid biosynthesis; dimethylallyl diphosphate biosynthesis; dimethylallyl diphosphate from (2E)-4-hydroxy-3-methylbutenyl diphosphate: step 1/1. It participates in isoprenoid biosynthesis; isopentenyl diphosphate biosynthesis via DXP pathway; isopentenyl diphosphate from 1-deoxy-D-xylulose 5-phosphate: step 6/6. Catalyzes the conversion of 1-hydroxy-2-methyl-2-(E)-butenyl 4-diphosphate (HMBPP) into a mixture of isopentenyl diphosphate (IPP) and dimethylallyl diphosphate (DMAPP). Acts in the terminal step of the DOXP/MEP pathway for isoprenoid precursor biosynthesis. The polypeptide is 4-hydroxy-3-methylbut-2-enyl diphosphate reductase (Buchnera aphidicola subsp. Acyrthosiphon pisum (strain Tuc7)).